A 341-amino-acid chain; its full sequence is Phosphate acyltransferase (341 aa).

Belongs to the PlsX family. In terms of assembly, homodimer. Probably interacts with PlsY.

It is found in the cytoplasm. It carries out the reaction a fatty acyl-[ACP] + phosphate = an acyl phosphate + holo-[ACP]. Its pathway is lipid metabolism; phospholipid metabolism. Its function is as follows. Catalyzes the reversible formation of acyl-phosphate (acyl-PO(4)) from acyl-[acyl-carrier-protein] (acyl-ACP). This enzyme utilizes acyl-ACP as fatty acyl donor, but not acyl-CoA. This is Phosphate acyltransferase from Aliivibrio salmonicida (strain LFI1238) (Vibrio salmonicida (strain LFI1238)).